The following is a 319-amino-acid chain: MPRLQQKWLNSRECPTPRGEAAKGLFPTKDDPSAHKRVSPSDKDIFILCCKLGIALLCLGLLGEVAVRARRALTLDSFNSSSVQDYNLNNSENSTFLLRQGPQPTSSYKPHRFCPSEIEIRMLAKNYIFTNKTNPIGRLLVTMLRNESLSFSTIFTQIQKLEMGIENRKRRSTSIEEQVQGLLTTGLEVKKGKKSVFVKIGDRWWQPGTYRGPYIYRPTDAPLPYTGRYDLNWDRWVTVNGYKVLYRSLPFRERLARARPPWCMLSQEEKDDMKQQVHDYIYLGTGMHFWGKIFHTKEGTVAGLIEHYSAKTYGMSYYE.

The tract at residues 1–39 (MPRLQQKWLNSRECPTPRGEAAKGLFPTKDDPSAHKRVS) is disordered. At 1 to 44 (MPRLQQKWLNSRECPTPRGEAAKGLFPTKDDPSAHKRVSPSDKD) the chain is on the cytoplasmic side. Basic and acidic residues predominate over residues 28–39 (TKDDPSAHKRVS). Residues 45–65 (IFILCCKLGIALLCLGLLGEV) traverse the membrane as a helical segment. Over 66 to 319 (AVRARRALTL…AKTYGMSYYE (254 aa)) the chain is Extracellular. N-linked (GlcNAc...) asparagine; by host glycans are attached at residues Asn79, Asn89, Asn93, Asn131, and Asn146.

It belongs to the mouse mammary tumor virus PR73 superantigen family.

Its subcellular location is the membrane. In terms of biological role, superantigen. The chain is Protein PR73 (sag) from Mus musculus (Mouse).